The primary structure comprises 364 residues: UDP-N-acetylglucosamine--N-acetylmuramyl-(pentapeptide) pyrophosphoryl-undecaprenol N-acetylglucosamine transferase (364 aa).

Residues 15–17 (TGG), N123, R164, S191, and Q286 contribute to the UDP-N-acetyl-alpha-D-glucosamine site.

The protein belongs to the glycosyltransferase 28 family. MurG subfamily.

The protein resides in the cell inner membrane. It carries out the reaction di-trans,octa-cis-undecaprenyl diphospho-N-acetyl-alpha-D-muramoyl-L-alanyl-D-glutamyl-meso-2,6-diaminopimeloyl-D-alanyl-D-alanine + UDP-N-acetyl-alpha-D-glucosamine = di-trans,octa-cis-undecaprenyl diphospho-[N-acetyl-alpha-D-glucosaminyl-(1-&gt;4)]-N-acetyl-alpha-D-muramoyl-L-alanyl-D-glutamyl-meso-2,6-diaminopimeloyl-D-alanyl-D-alanine + UDP + H(+). It participates in cell wall biogenesis; peptidoglycan biosynthesis. Functionally, cell wall formation. Catalyzes the transfer of a GlcNAc subunit on undecaprenyl-pyrophosphoryl-MurNAc-pentapeptide (lipid intermediate I) to form undecaprenyl-pyrophosphoryl-MurNAc-(pentapeptide)GlcNAc (lipid intermediate II). The chain is UDP-N-acetylglucosamine--N-acetylmuramyl-(pentapeptide) pyrophosphoryl-undecaprenol N-acetylglucosamine transferase from Prochlorococcus marinus subsp. pastoris (strain CCMP1986 / NIES-2087 / MED4).